A 569-amino-acid polypeptide reads, in one-letter code: Peroxisomal targeting signal receptor (569 aa).

Cys5 is covalently cross-linked (Glycyl cysteine thioester (Cys-Gly) (interchain with G-Cter in ubiquitin)). The amphipathic helix 1 (AH1) stretch occupies residues 6 to 28; it reads SVGANPLAQLNKRVQQDRTLQHG. Lys17 participates in a covalent cross-link: Glycyl lysine isopeptide (Lys-Gly) (interchain with G-Cter in ubiquitin). Residues 53-71 are amphipathic helix 2 (AH2); sequence KFQMEQFMAGKASSGGNMF. Positions 112–116 match the WxxxF/Y motif 1 motif; the sequence is WSQEF. The tract at residues 150–154 is amphipathic helix 3 (AH3); the sequence is PMNMM. The WxxxF/Y motif 2 signature appears at 181-185; that stretch reads WEQQF. An amphipathic helix 4 (AH4) region spans residues 229–245; the sequence is FQQIWNDIHDQTDDLDS. TPR repeat units lie at residues 281-315, 316-349, 417-450, 452-484, and 486-518; these read NTDA…DPGH, VDAW…DPHN, PDVQ…RPDD, CMWN…KPTF, and RARY…HEVE.

Belongs to the peroxisomal targeting signal receptor family. Interacts (via WxxxF/Y and LVxEF motifs) with PEX14; promoting translocation through the PEX13-PEX14 docking complex. Post-translationally, monoubiquitinated at Cys-5 by PEX2 during PEX5 passage through the retrotranslocation channel: monoubiquitination acts as a signal for PEX5 extraction and is required for proper export from peroxisomes and recycling. When PEX5 recycling is compromised, polyubiquitinated at Lys-17 by PEX10 during its passage through the retrotranslocation channel, leading to its degradation.

The protein localises to the cytoplasm. It localises to the cytosol. It is found in the peroxisome matrix. Its function is as follows. Receptor that mediates peroxisomal import of proteins containing a C-terminal PTS1-type tripeptide peroxisomal targeting signal (SKL-type). Binds to cargo proteins containing a PTS1 peroxisomal targeting signal in the cytosol, and translocates them into the peroxisome matrix by passing through the PEX13-PEX14 docking complex along with cargo proteins. PEX5 receptor is then retrotranslocated into the cytosol, leading to release of bound cargo in the peroxisome matrix, and reset for a subsequent peroxisome import cycle. The protein is Peroxisomal targeting signal receptor (PEX5) of Eremothecium gossypii (strain ATCC 10895 / CBS 109.51 / FGSC 9923 / NRRL Y-1056) (Yeast).